A 632-amino-acid chain; its full sequence is Epsin-3 (632 aa).

Residues Arg8, Lys11, Arg25, Asn30, Arg63, and His73 each contribute to the a 1,2-diacyl-sn-glycero-3-phospho-(1D-myo-inositol-4,5-bisphosphate) site. Residues 12–144 (NIVHNYSEAE…KDEERLRQER (133 aa)) form the ENTH domain. A disordered region spans residues 172 to 214 (YGEDYSRSRGSPSSYNSSSSSPRYTSDLEQARPQTSGEEELQL). The span at 179–196 (SRGSPSSYNSSSSSPRYT) shows a compositional bias: low complexity. Phosphoserine occurs at positions 191 and 192. UIM domains lie at 209 to 228 (EEEL…AEKP) and 236 to 255 (DEDL…HEKE). The disordered stretch occupies residues 257–296 (RSWQGDGSPMANGAGAVVHHQRDREPEREERKEEEKLKTS). Position 264 is a phosphoserine (Ser264). Residues 276–294 (HQRDREPEREERKEEEKLK) show a composition bias toward basic and acidic residues. Repeat copies occupy residues 321–323 (DPW), 344–346 (DPW), 371–373 (EPW), 387–389 (DPW), 404–406 (DPW), 524–526 (NPF), 537–539 (NPF), and 629–631 (NPF). A 5 X 3 AA repeats of [DE]-P-W region spans residues 321-406 (DPWDIPGFRP…KLPSTGADPW (86 aa)). 3 disordered regions span residues 326 to 501 (PGFR…SFLG), 525 to 560 (PFLT…PALG), and 604 to 632 (AFAP…NPFL). The span at 353–371 (TVLSRSQPWDLTPMLSSSE) shows a compositional bias: polar residues. Residues 524–631 (NPFLTGLSAP…PPPQTGTNPF (108 aa)) are 3 X 3 AA repeats of N-P-F.

This sequence belongs to the epsin family. Detected in migrating keratinocytes from wounded skin, but not in differentiating keratinocytes or in normal skin. Detected in chronic wounds, basal cell carcinoma and ulcerative colitis.

It localises to the cytoplasm. It is found in the perinuclear region. Its subcellular location is the cytoplasmic vesicle. The protein localises to the clathrin-coated vesicle. The protein resides in the nucleus. This is Epsin-3 (EPN3) from Homo sapiens (Human).